The following is a 776-amino-acid chain: Peregrinol diphosphate synthase CPS1, chloroplastic (776 aa).

A chloroplast-targeting transit peptide spans 1 to 17 (MASTPTLNLSITTPFVR). Residue Lys238 participates in substrate binding. Asp371 and Asp373 together coordinate Mg(2+). The DXDD motif motif lies at 371-374 (DIDD). Lys457 lines the substrate pocket.

The protein belongs to the terpene synthase family. Mg(2+) is required as a cofactor. Present in both leaves and flowers, with higher levels in leaves.

It localises to the plastid. It is found in the chloroplast. The enzyme catalyses peregrinol diphosphate = (2E,6E,10E)-geranylgeranyl diphosphate + H2O. It functions in the pathway secondary metabolite biosynthesis; terpenoid biosynthesis. Involved in the biosynthesis of labdane-type diterpenoid including marrubiin and other labdane-related furanoid diterpenoids with potential applications as anti-diabetics, analgesics or vasorelaxants. Terpene synthase that produces peregrinol diphosphate from geranylgeranyl diphosphate (GGPP). This is Peregrinol diphosphate synthase CPS1, chloroplastic from Marrubium vulgare (White horehound).